A 509-amino-acid polypeptide reads, in one-letter code: Activin receptor type-1 (509 aa).

An N-terminal signal peptide occupies residues 1–20 (MVDGVMILPVLVMIAFPFPS). The Extracellular portion of the chain corresponds to 21 to 123 (MEDEKPKVNP…FPGTQNFHLE (103 aa)). N-linked (GlcNAc...) asparagine glycosylation occurs at Asn-102. A helical transmembrane segment spans residues 124–146 (VGLIILSVVFAVCLLACLLGVAL). Residues 147–509 (RKFKRRNQER…NSLDKLKTDC (363 aa)) lie on the Cytoplasmic side of the membrane. Residues 178-207 (STLADLLDHSCTSGSGSGLPFLVQRTVARQ) enclose the GS domain. The Protein kinase domain occupies 208-502 (ITLLECVGKG…KTLTKIDNSL (295 aa)). ATP-binding positions include 214–222 (VGKGRYGEV) and Lys-235. The Proton acceptor role is filled by Asp-336. Ser-501 carries the post-translational modification Phosphoserine.

This sequence belongs to the protein kinase superfamily. TKL Ser/Thr protein kinase family. TGFB receptor subfamily. As to quaternary structure, interacts with FKBP1A. Interacts with FCHO1. Interacts with CLU. Interacts with type II receptors AMHR2 and ACVR2A. Interacts with BMP7. Interacts with BMP9. Interacts with BMP6 (when glycosylated); the interaction may induce HAMP expression. Interacts with TSC22D1/TSC-22. The cofactor is Mg(2+). Requires Mn(2+) as cofactor.

The protein resides in the membrane. The enzyme catalyses L-threonyl-[receptor-protein] + ATP = O-phospho-L-threonyl-[receptor-protein] + ADP + H(+). The catalysed reaction is L-seryl-[receptor-protein] + ATP = O-phospho-L-seryl-[receptor-protein] + ADP + H(+). Bone morphogenetic protein (BMP) type I receptor that is involved in a wide variety of biological processes, including bone, heart, cartilage, nervous, and reproductive system development and regulation. As a type I receptor, forms heterotetrameric receptor complexes with the type II receptors AMHR2, ACVR2A ors ACVR2B. Upon binding of ligands such as BMP7 or BMP9 to the heteromeric complexes, type II receptors transphosphorylate ACVR1 intracellular domain. In turn, ACVR1 kinase domain is activated and subsequently phosphorylates SMAD1/5/8 proteins that transduce the signal. In addition to its role in mediating BMP pathway-specific signaling, suppresses TGFbeta/activin pathway signaling by interfering with the binding of activin to its type II receptor. Besides canonical SMAD signaling, can activate non-canonical signaling pathways. May promote the expression of HAMP, potentially via its interaction with BMP6. The sequence is that of Activin receptor type-1 (ACVR1) from Bos taurus (Bovine).